A 249-amino-acid chain; its full sequence is Purine nucleoside phosphorylase ML0918 (249 aa).

Residues H72, C109, and H126 each coordinate Zn(2+).

It belongs to the purine nucleoside phosphorylase YfiH/LACC1 family. Homodimer. Cu(2+) serves as cofactor. It depends on Zn(2+) as a cofactor.

It carries out the reaction adenosine + phosphate = alpha-D-ribose 1-phosphate + adenine. The enzyme catalyses S-methyl-5'-thioadenosine + phosphate = 5-(methylsulfanyl)-alpha-D-ribose 1-phosphate + adenine. The catalysed reaction is inosine + phosphate = alpha-D-ribose 1-phosphate + hypoxanthine. It catalyses the reaction adenosine + H2O + H(+) = inosine + NH4(+). In terms of biological role, purine nucleoside enzyme that catalyzes the phosphorolysis of adenosine and inosine nucleosides, yielding D-ribose 1-phosphate and the respective free bases, adenine and hypoxanthine. Also catalyzes the phosphorolysis of S-methyl-5'-thioadenosine into adenine and S-methyl-5-thio-alpha-D-ribose 1-phosphate. Also has adenosine deaminase activity. The chain is Purine nucleoside phosphorylase ML0918 from Mycobacterium leprae (strain TN).